The chain runs to 187 residues: UPF0340 protein SGO_0411 (187 aa).

This sequence belongs to the UPF0340 family.

This chain is UPF0340 protein SGO_0411, found in Streptococcus gordonii (strain Challis / ATCC 35105 / BCRC 15272 / CH1 / DL1 / V288).